Here is a 78-residue protein sequence, read N- to C-terminus: ATP synthase subunit c (78 aa).

Helical transmembrane passes span 16-36 (LATL…ASFL) and 57-77 (MALA…ILFV).

This sequence belongs to the ATPase C chain family. F-type ATPases have 2 components, F(1) - the catalytic core - and F(0) - the membrane proton channel. F(1) has five subunits: alpha(3), beta(3), gamma(1), delta(1), epsilon(1). F(0) has three main subunits: a(1), b(2) and c(10-14). The alpha and beta chains form an alternating ring which encloses part of the gamma chain. F(1) is attached to F(0) by a central stalk formed by the gamma and epsilon chains, while a peripheral stalk is formed by the delta and b chains.

The protein resides in the cell inner membrane. In terms of biological role, f(1)F(0) ATP synthase produces ATP from ADP in the presence of a proton or sodium gradient. F-type ATPases consist of two structural domains, F(1) containing the extramembraneous catalytic core and F(0) containing the membrane proton channel, linked together by a central stalk and a peripheral stalk. During catalysis, ATP synthesis in the catalytic domain of F(1) is coupled via a rotary mechanism of the central stalk subunits to proton translocation. Functionally, key component of the F(0) channel; it plays a direct role in translocation across the membrane. A homomeric c-ring of between 10-14 subunits forms the central stalk rotor element with the F(1) delta and epsilon subunits. This Hyphomonas neptunium (strain ATCC 15444) protein is ATP synthase subunit c.